We begin with the raw amino-acid sequence, 173 residues long: uncharacterized protein (173 aa).

Positions 16–133 (DLVLRPETIT…KHVLIRFPNK (118 aa)) constitute an MSP domain. Basic and acidic residues predominate over residues 141–163 (KKMEEDDMKQQKERNKLSNEKMG). The disordered stretch occupies residues 141–173 (KKMEEDDMKQQKERNKLSNEKMGIRNQNMGEKK).

This is an uncharacterized protein from Caenorhabditis elegans.